Here is a 437-residue protein sequence, read N- to C-terminus: O-methyltransferase 10 (437 aa).

The S-adenosyl-L-methionine site is built by G259, E282, N315, and M316. The active-site Proton acceptor is H335.

Belongs to the class I-like SAM-binding methyltransferase superfamily. Cation-independent O-methyltransferase family. COMT subfamily.

The catalysed reaction is (3,5-dichloro-2,4,6-trihydroxyphenyl)hexan-1-one + S-adenosyl-L-methionine = 1-(3,5-dichloro-2,6-dihydroxy-4-methoxyphenyl)hexan-1-one + S-adenosyl-L-homocysteine + H(+). In Dictyostelium discoideum (Social amoeba), this protein is O-methyltransferase 10 (omt10).